A 508-amino-acid polypeptide reads, in one-letter code: Maturase K (508 aa).

The protein belongs to the intron maturase 2 family. MatK subfamily.

It is found in the plastid. Its subcellular location is the chloroplast. In terms of biological role, usually encoded in the trnK tRNA gene intron. Probably assists in splicing its own and other chloroplast group II introns. This is Maturase K from Wolffia arrhiza (Rootless water-meal).